A 512-amino-acid chain; its full sequence is N-acetyltryptophan 6-hydroxylase ivoC (512 aa).

Residues 6–26 traverse the membrane as a helical segment; sequence LVFSFPAWALLLVLTLLYTLY. N-linked (GlcNAc...) asparagine glycosylation is present at asparagine 118. Cysteine 453 serves as a coordination point for heme.

The protein belongs to the cytochrome P450 family. It depends on heme as a cofactor.

It is found in the membrane. Its pathway is pigment biosynthesis. Functionally, N-acetyltryptophan 6-hydroxylase; part of the pathway that mediates the biosynthesis of the gray-brown conidiophore pigment. The first step of the pathway is performed by the nonribosomal peptide synthetase ivoA that catalyzes ATP-dependent unidirectional stereoinversion of L-tryptophan to D-tryptophan with complete conversion. While the stereoinversion is catalyzed by the epimerization (E) domain of ivoA, the terminal condensation (C) domain stereoselectively hydrolyzes D-tryptophanyl-S-phosphopantetheine thioester and thus represents a non-canonical C domain function. D-tryptophan is acetylated, probably by an endogenous acetyltransferase. N-acetyltryptophan is further 6-hydroxylated into N-acetyl-6-hydroxytryptophan (AHT) by the cytochrome P450 monooxygenase ivoC. N-acetyl-6-hydroxytryptophan is substrate of the N-acetyl-6-hydroxytryptophan oxidase ivoB to produce the gray-brown conidiophore pigment. The sequence is that of N-acetyltryptophan 6-hydroxylase ivoC from Emericella nidulans (strain FGSC A4 / ATCC 38163 / CBS 112.46 / NRRL 194 / M139) (Aspergillus nidulans).